The sequence spans 314 residues: Mitochondrial thiamine pyrophosphate carrier 1 (314 aa).

The next 6 helical transmembrane spans lie at 14–30 (VAAWKTLLAGAVSGLLA), 84–100 (LLYVTYGSAQFSSYSLF), 116–136 (LVVGAFAGITSSIVSYPFDVL), 170–186 (GSIASMTTITLTASIMF), 217–233 (SAGTIGGVIAKIITFPL), and 285–302 (GILVALSKTIPTTFVSFW). Solcar repeat units lie at residues 14 to 103 (VAAW…FNRY), 110 to 195 (EARL…IRIY), and 210 to 310 (ELAT…AIHY).

Belongs to the mitochondrial carrier (TC 2.A.29) family.

Its subcellular location is the mitochondrion inner membrane. Its function is as follows. Mitochondrial transporter that mediates uptake of thiamine pyrophosphate (ThPP) into mitochondria. This Saccharomyces cerevisiae (strain YJM789) (Baker's yeast) protein is Mitochondrial thiamine pyrophosphate carrier 1 (TPC1).